Reading from the N-terminus, the 688-residue chain is PHD finger protein 21A (688 aa).

A Glycyl lysine isopeptide (Lys-Gly) (interchain with G-Cter in SUMO2) cross-link involves residue lysine 65. Disordered stretches follow at residues 78–127 (SQSE…LTAS) and 327–373 (PQTV…ENPQ). Residues 85–127 (QTAQQQPLQPLQQQQPQQPQQQQQQQQQHAQQSAAAPPSLTAS) are compositionally biased toward low complexity. The span at 336–354 (SLEKQTVKSHPEAEEKQAE) shows a compositional bias: basic and acidic residues. The segment at residues 434-446 (TRKRGRPPKYNAV) is a DNA-binding region (a.T hook). Residues 449-471 (FGALTPTSPPSSHPDSPENEKTE) are disordered. Threonine 453 carries the phosphothreonine modification. Serine 456 is subject to Phosphoserine. Residues 497–544 (EDFCSVCRKSGQLLMCDTCSRVYHLDCLEPPLKTIPKGMWICPRCQDQ) form a PHD-type zinc finger. Positions 571–609 (KEEEKQKLLKWSSDLKQEREQLEQKVKELSSSISKCMEM) form a coiled coil. A disordered region spans residues 650–688 (GALSNGPDCTPPANAASTPAPSPSSQSCTANCNQGEETK). A compositionally biased stretch (low complexity) spans 660–679 (PPANAASTPAPSPSSQSCTA).

In terms of assembly, component of a BHC histone deacetylase complex that contains HDAC1, HDAC2, HMG20B/BRAF35, KDM1A, RCOR1/CoREST and PHF21A/BHC80. The BHC complex may also contain ZMYM2, ZNF217, ZMYM3, GSE1 and GTF2I. In the complex, it interacts directly with HDAC1, HDAC2, HMG20B/BRAF35, KDM1A and RCOR1/CoREST. In terms of tissue distribution, expressed in the brain and testis. Weakly or not expressed in other tissues tested. Localized throughout the central nervous system (CNS) in brain, including the cerebellum, hippocampus, and cortex. Notably present in neuronal cells of granular cell layer and dentate gyrus in cerebellum and hippocampus, respectively. In the seminiferous tubules, the signals it is present strongly in spermatocytes, and weakly in spermatogonia and round spermatids. In some cases, it is also observed solely in spermatocytes (at protein level).

It localises to the nucleus. Its function is as follows. Component of the BHC complex, a corepressor complex that represses transcription of neuron-specific genes in non-neuronal cells. The BHC complex is recruited at RE1/NRSE sites by REST and acts by deacetylating and demethylating specific sites on histones, thereby acting as a chromatin modifier. In the BHC complex, it may act as a scaffold. Inhibits KDM1A-mediated demethylation of 'Lys-4' of histone H3 in vitro, suggesting a role in demethylation regulation. This is PHD finger protein 21A from Mus musculus (Mouse).